The sequence spans 129 residues: Lysozyme C (129 aa).

A C-type lysozyme domain is found at 1 to 129; it reads KVYGRCELAA…VNAWTRGCRL (129 aa). Intrachain disulfides connect Cys-6/Cys-127, Cys-30/Cys-115, Cys-64/Cys-80, and Cys-76/Cys-94. Residues Glu-35 and Asp-52 contribute to the active site.

The protein belongs to the glycosyl hydrolase 22 family. As to quaternary structure, monomer.

It localises to the secreted. The catalysed reaction is Hydrolysis of (1-&gt;4)-beta-linkages between N-acetylmuramic acid and N-acetyl-D-glucosamine residues in a peptidoglycan and between N-acetyl-D-glucosamine residues in chitodextrins.. In terms of biological role, lysozymes have primarily a bacteriolytic function; those in tissues and body fluids are associated with the monocyte-macrophage system and enhance the activity of immunoagents. This Syrmaticus soemmerringii (Copper pheasant) protein is Lysozyme C (LYZ).